The chain runs to 202 residues: ATP synthase subunit b 1 (202 aa).

The chain crosses the membrane as a helical span at residues 17–37; sequence IAAVLCFSVLVPLVAMAAEGG.

It belongs to the ATPase B chain family. As to quaternary structure, F-type ATPases have 2 components, F(1) - the catalytic core - and F(0) - the membrane proton channel. F(1) has five subunits: alpha(3), beta(3), gamma(1), delta(1), epsilon(1). F(0) has three main subunits: a(1), b(2) and c(10-14). The alpha and beta chains form an alternating ring which encloses part of the gamma chain. F(1) is attached to F(0) by a central stalk formed by the gamma and epsilon chains, while a peripheral stalk is formed by the delta and b chains.

It is found in the cell inner membrane. Its function is as follows. F(1)F(0) ATP synthase produces ATP from ADP in the presence of a proton or sodium gradient. F-type ATPases consist of two structural domains, F(1) containing the extramembraneous catalytic core and F(0) containing the membrane proton channel, linked together by a central stalk and a peripheral stalk. During catalysis, ATP synthesis in the catalytic domain of F(1) is coupled via a rotary mechanism of the central stalk subunits to proton translocation. In terms of biological role, component of the F(0) channel, it forms part of the peripheral stalk, linking F(1) to F(0). This Syntrophus aciditrophicus (strain SB) protein is ATP synthase subunit b 1.